A 322-amino-acid chain; its full sequence is Cytochrome c biogenesis protein CcsA (322 aa).

Helical transmembrane passes span 15-35 (FSIV…VDGI), 45-65 (GMIV…TYSG), 72-92 (LYES…VPYF), 98-120 (YLST…GLLT), 144-164 (MILG…LLVI), 226-246 (GISL…VWAN), 253-273 (WNWD…AIYL), and 287-307 (AIVA…VNLL).

Belongs to the CcmF/CycK/Ccl1/NrfE/CcsA family. As to quaternary structure, may interact with Ccs1.

It localises to the plastid. The protein localises to the chloroplast thylakoid membrane. Required during biogenesis of c-type cytochromes (cytochrome c6 and cytochrome f) at the step of heme attachment. The chain is Cytochrome c biogenesis protein CcsA from Coffea arabica (Arabian coffee).